Reading from the N-terminus, the 180-residue chain is ATP synthase subunit delta (180 aa).

Belongs to the ATPase delta chain family. As to quaternary structure, F-type ATPases have 2 components, F(1) - the catalytic core - and F(0) - the membrane proton channel. F(1) has five subunits: alpha(3), beta(3), gamma(1), delta(1), epsilon(1). CF(0) has four main subunits: a(1), b(1), b'(1) and c(10-14). The alpha and beta chains form an alternating ring which encloses part of the gamma chain. F(1) is attached to F(0) by a central stalk formed by the gamma and epsilon chains, while a peripheral stalk is formed by the delta, b and b' chains.

It localises to the cellular thylakoid membrane. In terms of biological role, f(1)F(0) ATP synthase produces ATP from ADP in the presence of a proton or sodium gradient. F-type ATPases consist of two structural domains, F(1) containing the extramembraneous catalytic core and F(0) containing the membrane proton channel, linked together by a central stalk and a peripheral stalk. During catalysis, ATP synthesis in the catalytic domain of F(1) is coupled via a rotary mechanism of the central stalk subunits to proton translocation. This protein is part of the stalk that links CF(0) to CF(1). It either transmits conformational changes from CF(0) to CF(1) or is implicated in proton conduction. This chain is ATP synthase subunit delta, found in Prochlorococcus marinus (strain MIT 9312).